Here is a 286-residue protein sequence, read N- to C-terminus: S-methyl-5'-thioadenosine phosphorylase (286 aa).

Phosphate contacts are provided by residues S11, R53–H54, and S86–A87. M185 is a substrate binding site. T186 contacts phosphate. D209–D211 provides a ligand contact to substrate.

It belongs to the PNP/MTAP phosphorylase family. MTAP subfamily. In terms of assembly, homohexamer. Dimer of a homotrimer.

It carries out the reaction S-methyl-5'-thioadenosine + phosphate = 5-(methylsulfanyl)-alpha-D-ribose 1-phosphate + adenine. Its pathway is amino-acid biosynthesis; L-methionine biosynthesis via salvage pathway; S-methyl-5-thio-alpha-D-ribose 1-phosphate from S-methyl-5'-thioadenosine (phosphorylase route): step 1/1. In terms of biological role, catalyzes the reversible phosphorylation of S-methyl-5'-thioadenosine (MTA) to adenine and 5-methylthioribose-1-phosphate. Involved in the breakdown of MTA, a major by-product of polyamine biosynthesis. Responsible for the first step in the methionine salvage pathway after MTA has been generated from S-adenosylmethionine. Has broad substrate specificity with 6-aminopurine nucleosides as preferred substrates. The chain is S-methyl-5'-thioadenosine phosphorylase from Geobacter sulfurreducens (strain ATCC 51573 / DSM 12127 / PCA).